Consider the following 909-residue polypeptide: Nitrate reductase [NADH] (909 aa).

A Mo-molybdopterin-binding site is contributed by Cys187. One can recognise a Cytochrome b5 heme-binding domain in the interval 535-610; sequence SKMYSMSEVK…LEDFRIGELI (76 aa). Residues His570 and His593 each contribute to the heme site. The 113-residue stretch at 652-764 folds into the FAD-binding FR-type domain; sequence REKIPCKLVD…KGPLGHIEYQ (113 aa). FAD-binding positions include 704–707, 721–725, Phe726, Phe733, 738–740, and Thr791; these read RAYT, VVKIY, and QMS.

It belongs to the nitrate reductase family. As to quaternary structure, homodimer. FAD serves as cofactor. The cofactor is heme. Requires Mo-molybdopterin as cofactor.

It carries out the reaction nitrite + NAD(+) + H2O = nitrate + NADH + H(+). Its activity is regulated as follows. Regulated by the nitrogen source and controlled by the circadian rhythm. Functionally, nitrate reductase is a key enzyme involved in the first step of nitrate assimilation in plants, fungi and bacteria. The chain is Nitrate reductase [NADH] (NIA) from Petunia hybrida (Petunia).